The sequence spans 230 residues: Cytidylate kinase (230 aa).

12-20 (GPSGAGKGT) contributes to the ATP binding site.

It belongs to the cytidylate kinase family. Type 1 subfamily.

Its subcellular location is the cytoplasm. It carries out the reaction CMP + ATP = CDP + ADP. The catalysed reaction is dCMP + ATP = dCDP + ADP. This is Cytidylate kinase from Aeromonas salmonicida (strain A449).